The primary structure comprises 151 residues: IFN signaling evasion protein OPG029 (151 aa).

It belongs to the orthopoxvirus OPG029 family. As to quaternary structure, interacts with host TANK, TBKBP1 and AZI2; these interactions prevent interferon production. Interacts with host STAT2.

In terms of biological role, prevents establishment of cellular antiviral state by blocking virus-induced phosphorylation and activation of interferon regulatory factors 3/IRF3 and 7/IRF7, transcription factors critical for the induction of interferons alpha and beta. This blockage is produced through the inhibition of host TBK1, by binding host TBK1 adapter proteins TBKBP1 and AZI2, thereby producing a strong inhibition of the phosphorylation and activation of IRF3 and IRF7. Also acts as an inhibitor of the cellular response to type I IFN by interacting with host STAT2. Mechanistically, exerts its inhibitory effect after host ISGF3 complex (composed of STAT1, STAT2 and IRF9) binding to the interferon stimulated response element (ISRE). This is IFN signaling evasion protein OPG029 (OPG029) from Homo sapiens (Human).